A 628-amino-acid polypeptide reads, in one-letter code: Kinesin-like protein subito (628 aa).

Residues 28-68 form a disordered region; it reads RFRPRPNKKMRLFDNIQESEEESFSEYSDTESEYKYQSSEA. Acidic residues predominate over residues 44 to 58; the sequence is QESEEESFSEYSDTE. Residues 87–479 form the Kinesin motor domain; sequence GPQVFLRLRP…LNFASIAKNI (393 aa). Residue 169–176 participates in ATP binding; the sequence is GTSGSGKT. Positions 509-612 form a coiled coil; it reads DYTKELEDEN…KNPASDTDIS (104 aa). Residues 596–628 form a disordered region; the sequence is KDEIEELKNPASDTDISDDPNESKSPIEILDDD. Position 607 is a phosphoserine (Ser-607). Residue Thr-609 is modified to Phosphothreonine. Ser-612 bears the Phosphoserine mark.

It belongs to the TRAFAC class myosin-kinesin ATPase superfamily. Kinesin family.

The protein resides in the cytoplasm. The protein localises to the cytoskeleton. Its function is as follows. Required during female meiosis for bipolar spindle formation in the absence of the centrosomes and chromosome homolog segregation. Also has roles in male meiosis and mitotic divisions of the early embryo. In Drosophila melanogaster (Fruit fly), this protein is Kinesin-like protein subito (sub).